We begin with the raw amino-acid sequence, 695 residues long: Protein-glutamine gamma-glutamyltransferase 2 (695 aa).

Catalysis depends on residues C272, H332, and D355. 5 residues coordinate Ca(2+): N395, D397, E434, E444, and E449. GTP-binding positions include 476 to 482 (SIKHAQP) and 578 to 581 (ANIP).

This sequence belongs to the transglutaminase superfamily. Transglutaminase family. Monomer. Ca(2+) is required as a cofactor.

It is found in the cytoplasm. It localises to the cytosol. Its subcellular location is the nucleus. The protein resides in the chromosome. The protein localises to the secreted. It is found in the extracellular space. It localises to the extracellular matrix. Its subcellular location is the cell membrane. The protein resides in the mitochondrion. It catalyses the reaction L-glutaminyl-[protein] + L-lysyl-[protein] = [protein]-L-lysyl-N(6)-5-L-glutamyl-[protein] + NH4(+). It carries out the reaction L-glutaminyl-[protein] + serotonin = 5-serotonyl-L-glutamyl-[protein] + NH4(+). The enzyme catalyses L-glutaminyl-[protein] + dopamine = 5-dopaminyl-L-glutamyl-[protein] + NH4(+). The catalysed reaction is L-glutaminyl-[protein] + histamine = 5-histaminyl-L-glutamyl-[protein] + NH4(+). It catalyses the reaction L-glutaminyl-[protein] + (R)-noradrenaline = 5-(R)-noradrenalinyl-L-glutamyl-[protein] + NH4(+). It carries out the reaction L-glutaminyl-[protein] + H2O = L-glutamyl-[protein] + NH4(+). With respect to regulation, acyltransferase activity is regulated by the binding of GTP and Ca(2+): inactivated by GTP, which stabilizes its closed structure, thereby obstructing the accessibility of substrates to the active sites. In contrast, Ca(2+) acts as a cofactor by inducing conformational change to the active open form. In absence of Ca(2+), Mg(2+) may bind Ca(2+)-binding sites, promoting GTP-binding and subsequent inhibition of the acyltransferase activity. In terms of biological role, calcium-dependent acyltransferase that catalyzes the formation of covalent bonds between peptide-bound glutamine and various primary amines, such as gamma-amino group of peptide-bound lysine, or mono- and polyamines, thereby producing cross-linked or aminated proteins, respectively. Involved in many biological processes, such as bone development, angiogenesis, wound healing, cellular differentiation, chromatin modification and apoptosis. Acts as a protein-glutamine gamma-glutamyltransferase by mediating the cross-linking of proteins: under physiological conditions, the protein cross-linking activity is inhibited by GTP; inhibition is relieved by Ca(2+) in response to various stresses. When secreted, catalyzes cross-linking of proteins of the extracellular matrix, resulting in the formation of scaffolds. Plays a key role during apoptosis, both by (1) promoting the cross-linking of cytoskeletal proteins resulting in condensation of the cytoplasm, and by (2) mediating cross-linking proteins of the extracellular matrix, resulting in the irreversible formation of scaffolds that stabilize the integrity of the dying cells before their clearance by phagocytosis, thereby preventing the leakage of harmful intracellular components. In addition to protein cross-linking, can use different monoamine substrates to catalyze a vast array of protein post-translational modifications: mediates aminylation of serotonin, dopamine, noradrenaline or histamine into glutamine residues of target proteins to generate protein serotonylation, dopaminylation, noradrenalinylation or histaminylation, respectively. Mediates protein serotonylation of small GTPases during activation and aggregation of platelets, leading to constitutive activation of these GTPases. Plays a key role in chromatin organization by mediating serotonylation and dopaminylation of histone H3. Catalyzes serotonylation of 'Gln-5' of histone H3 (H3Q5ser) during serotonergic neuron differentiation, thereby facilitating transcription. Acts as a mediator of neurotransmission-independent role of nuclear dopamine in ventral tegmental area (VTA) neurons: catalyzes dopaminylation of 'Gln-5' of histone H3 (H3Q5dop), thereby regulating relapse-related transcriptional plasticity in the reward system. Also acts as a protein deamidase by mediating the side chain deamidation of specific glutamine residues of proteins to glutamate. May also act as an isopeptidase cleaving the previously formed cross-links. Also able to participate in signaling pathways independently of its acyltransferase activity: acts as a signal transducer in alpha-1 adrenergic receptor-mediated stimulation of phospholipase C-delta (PLCD) activity and is required for coupling alpha-1 adrenergic agonists to the stimulation of phosphoinositide lipid metabolism. This chain is Protein-glutamine gamma-glutamyltransferase 2, found in Pagrus major (Red sea bream).